An 802-amino-acid chain; its full sequence is Phenylalanine--tRNA ligase beta subunit (802 aa).

The region spanning 40–155 (SASLKNVVVG…EHVETGVSAI (116 aa)) is the tRNA-binding domain. The B5 domain occupies 409 to 484 (KAVNKIETSL…RIYGYDEIPV (76 aa)). Positions 462, 468, 471, and 472 each coordinate Mg(2+). The FDX-ACB domain occupies 709 to 802 (PRYPEMTRDL…LQAKLHAIIR (94 aa)).

Belongs to the phenylalanyl-tRNA synthetase beta subunit family. Type 1 subfamily. Tetramer of two alpha and two beta subunits. Requires Mg(2+) as cofactor.

The protein resides in the cytoplasm. The enzyme catalyses tRNA(Phe) + L-phenylalanine + ATP = L-phenylalanyl-tRNA(Phe) + AMP + diphosphate + H(+). The polypeptide is Phenylalanine--tRNA ligase beta subunit (Listeria innocua serovar 6a (strain ATCC BAA-680 / CLIP 11262)).